A 342-amino-acid polypeptide reads, in one-letter code: Guanine nucleotide-binding protein alpha-9 subunit (342 aa).

A lipid anchor (N-myristoyl glycine) is attached at Gly-2. Cys-3 carries S-palmitoyl cysteine lipidation. The G-alpha domain occupies 28-342; sequence REIKLLLLGS…IIQSILKLHY (315 aa). The segment at 31 to 44 is G1 motif; sequence KLLLLGSGDSGKST. Residues 36–43, 167–173, 192–196, 261–264, and Ala-316 contribute to the GTP site; these read GSGDSGKS, LRCRQRT, DVGGQ, and NKND. Ser-43 and Thr-173 together coordinate Mg(2+). A G2 motif region spans residues 165–173; that stretch reads DVLRCRQRT. The interval 188 to 197 is G3 motif; the sequence is FRLIDVGGQK. The interval 257 to 264 is G4 motif; that stretch reads VLFLNKND. The interval 314 to 319 is G5 motif; that stretch reads TTATDT.

The protein belongs to the G-alpha family. In terms of assembly, g proteins are composed of 3 units; alpha, beta and gamma. The alpha chain contains the guanine nucleotide binding site.

Functionally, guanine nucleotide-binding proteins (G proteins) are involved as modulators or transducers in various transmembrane signaling systems. G alpha-9 antagonizes broad chemotactic response. It functions rapidly following receptor stimulation to negatively regulate PI3K/PTEN, adenylyl cyclase, and guanylyl cyclase pathways. The chain is Guanine nucleotide-binding protein alpha-9 subunit (gpaI) from Dictyostelium discoideum (Social amoeba).